The chain runs to 240 residues: ATP synthase subunit a (240 aa).

Helical transmembrane passes span L21–G41, I78–V98, D116–I136, I183–A203, and F212–M232.

The protein belongs to the ATPase A chain family. F-type ATPases have 2 components, CF(1) - the catalytic core - and CF(0) - the membrane proton channel. CF(1) has five subunits: alpha(3), beta(3), gamma(1), delta(1), epsilon(1). CF(0) has three main subunits: a(1), b(2) and c(9-12). The alpha and beta chains form an alternating ring which encloses part of the gamma chain. CF(1) is attached to CF(0) by a central stalk formed by the gamma and epsilon chains, while a peripheral stalk is formed by the delta and b chains.

The protein resides in the cell membrane. Key component of the proton channel; it plays a direct role in the translocation of protons across the membrane. This is ATP synthase subunit a from Oceanobacillus iheyensis (strain DSM 14371 / CIP 107618 / JCM 11309 / KCTC 3954 / HTE831).